A 225-amino-acid polypeptide reads, in one-letter code: Ribonuclease 3 (225 aa).

The RNase III domain occupies 5–127; that stretch reads VTELYKTIDY…IIGAVFLDSD (123 aa). Glu-40 is a Mg(2+) binding site. Asp-44 is an active-site residue. 2 residues coordinate Mg(2+): Asp-113 and Glu-116. Residue Glu-116 is part of the active site. Residues 154-223 enclose the DRBM domain; it reads DPKTLLQEHL…AEKALKILKN (70 aa).

It belongs to the ribonuclease III family. Homodimer. It depends on Mg(2+) as a cofactor.

It localises to the cytoplasm. The enzyme catalyses Endonucleolytic cleavage to 5'-phosphomonoester.. In terms of biological role, digests double-stranded RNA. Involved in the processing of primary rRNA transcript to yield the immediate precursors to the large and small rRNAs (23S and 16S). Processes some mRNAs, and tRNAs when they are encoded in the rRNA operon. Processes pre-crRNA and tracrRNA of type II CRISPR loci if present in the organism. In Pseudoalteromonas translucida (strain TAC 125), this protein is Ribonuclease 3.